Reading from the N-terminus, the 434-residue chain is Adenylosuccinate synthetase (434 aa).

GTP-binding positions include 15 to 21 (GDEGKGK) and 43 to 45 (GHT). The active-site Proton acceptor is Asp16. The Mg(2+) site is built by Asp16 and Gly43. IMP is bound by residues 16–19 (DEGK), 41–44 (NAGH), Thr133, Arg147, Gln228, Thr243, and Arg307. The active-site Proton donor is the His44. A substrate-binding site is contributed by 303–309 (SVTGRAR). GTP contacts are provided by residues Arg309, 335–337 (KLD), and 418–420 (STG).

The protein belongs to the adenylosuccinate synthetase family. As to quaternary structure, homodimer. It depends on Mg(2+) as a cofactor.

Its subcellular location is the cytoplasm. The enzyme catalyses IMP + L-aspartate + GTP = N(6)-(1,2-dicarboxyethyl)-AMP + GDP + phosphate + 2 H(+). Its pathway is purine metabolism; AMP biosynthesis via de novo pathway; AMP from IMP: step 1/2. Functionally, plays an important role in the de novo pathway of purine nucleotide biosynthesis. Catalyzes the first committed step in the biosynthesis of AMP from IMP. The sequence is that of Adenylosuccinate synthetase from Neisseria meningitidis serogroup C / serotype 2a (strain ATCC 700532 / DSM 15464 / FAM18).